Reading from the N-terminus, the 120-residue chain is UPF0344 protein LMOf2365_2298 (120 aa).

4 helical membrane-spanning segments follow: residues 3-23 (GYIH…ALLI), 33-53 (MLQM…IMMV), 62-82 (ILAI…EMLL), and 92-112 (GMFL…GFYL).

Belongs to the UPF0344 family.

It is found in the cell membrane. This is UPF0344 protein LMOf2365_2298 from Listeria monocytogenes serotype 4b (strain F2365).